Here is a 138-residue protein sequence, read N- to C-terminus: Protein Rrf1 (138 aa).

The Response regulatory domain occupies 4-116 (RILVVQEDPD…LLLALVDRAL (113 aa)). Asp-13 and Asp-53 each carry 4-aspartylphosphate.

Functionally, may be involved in regulation of gene transcription. Belongs to the family of response regulators, and members of this family involved in the regulation of gene transcription are two-domain proteins. This protein contains only the N-terminal phosphorylation domain and not the C-terminal DNA-binding domain but it may bind to Rrf2 protein and the latter may bind to DNA. The protein is Protein Rrf1 (rrf1) of Nitratidesulfovibrio vulgaris (strain ATCC 29579 / DSM 644 / CCUG 34227 / NCIMB 8303 / VKM B-1760 / Hildenborough) (Desulfovibrio vulgaris).